Here is a 525-residue protein sequence, read N- to C-terminus: DNA damage-binding protein cmr1 (525 aa).

Over residues T34 to S50 the composition is skewed to polar residues. Disordered stretches follow at residues T34–K103, D214–P240, and T282–G301. The span at E83–A102 shows a compositional bias: basic and acidic residues. One copy of the WD 1 repeat lies at I182 to A223. Acidic residues predominate over residues E227–D239. WD repeat units follow at residues P247–K287, L339–P379, E384–K425, G448–L491, and D494–M525.

It belongs to the WD repeat DDB2/WDR76 family.

Functionally, DNA-binding protein that binds to both single- and double-stranded DNA. Binds preferentially to UV-damaged DNA. May be involved in DNA-metabolic processes. The polypeptide is DNA damage-binding protein cmr1 (Emericella nidulans (strain FGSC A4 / ATCC 38163 / CBS 112.46 / NRRL 194 / M139) (Aspergillus nidulans)).